Here is a 107-residue protein sequence, read N- to C-terminus: Phosphoribosyl-ATP pyrophosphatase (107 aa).

The protein belongs to the PRA-PH family.

The protein resides in the cytoplasm. The enzyme catalyses 1-(5-phospho-beta-D-ribosyl)-ATP + H2O = 1-(5-phospho-beta-D-ribosyl)-5'-AMP + diphosphate + H(+). It participates in amino-acid biosynthesis; L-histidine biosynthesis; L-histidine from 5-phospho-alpha-D-ribose 1-diphosphate: step 2/9. The polypeptide is Phosphoribosyl-ATP pyrophosphatase (Neisseria gonorrhoeae (strain ATCC 700825 / FA 1090)).